A 95-amino-acid chain; its full sequence is Integration host factor subunit beta (95 aa).

Belongs to the bacterial histone-like protein family. As to quaternary structure, heterodimer of an alpha and a beta chain.

This protein is one of the two subunits of integration host factor, a specific DNA-binding protein that functions in genetic recombination as well as in transcriptional and translational control. This is Integration host factor subunit beta from Erwinia tasmaniensis (strain DSM 17950 / CFBP 7177 / CIP 109463 / NCPPB 4357 / Et1/99).